A 306-amino-acid chain; its full sequence is Non-homologous end joining protein Ku 2 (306 aa).

Positions 21–206 (ISFGLVNIGV…EVSKQEIDMA (186 aa)) constitute a Ku domain. The interval 233–306 (LIDAKTKGTK…GSRDKTRKRA (74 aa)) is disordered. The segment covering 274–290 (RTSRRKTTASASRRRSS) has biased composition (basic residues). The segment covering 291-300 (SNREKTGSRD) has biased composition (basic and acidic residues).

It belongs to the prokaryotic Ku family. In terms of assembly, homodimer. Interacts with LigD.

In terms of biological role, with LigD forms a non-homologous end joining (NHEJ) DNA repair enzyme, which repairs dsDNA breaks with reduced fidelity. Binds linear dsDNA with 5'- and 3'- overhangs but not closed circular dsDNA nor ssDNA. Recruits and stimulates the ligase activity of LigD. This is Non-homologous end joining protein Ku 2 from Saccharopolyspora erythraea (strain ATCC 11635 / DSM 40517 / JCM 4748 / NBRC 13426 / NCIMB 8594 / NRRL 2338).